Reading from the N-terminus, the 98-residue chain is UPF0213 protein BPUM_0019 (98 aa).

Residues 4–79 form the GIY-YIG domain; it reads HNHYFYVLKC…KTWTRKKKDL (76 aa).

This sequence belongs to the UPF0213 family.

This is UPF0213 protein BPUM_0019 from Bacillus pumilus (strain SAFR-032).